The following is a 94-amino-acid chain: DNA-directed RNA polymerase subunit omega (94 aa).

Belongs to the RNA polymerase subunit omega family. In terms of assembly, the RNAP catalytic core consists of 2 alpha, 1 beta, 1 beta' and 1 omega subunit. When a sigma factor is associated with the core the holoenzyme is formed, which can initiate transcription.

The enzyme catalyses RNA(n) + a ribonucleoside 5'-triphosphate = RNA(n+1) + diphosphate. Functionally, promotes RNA polymerase assembly. Latches the N- and C-terminal regions of the beta' subunit thereby facilitating its interaction with the beta and alpha subunits. In Bifidobacterium longum (strain DJO10A), this protein is DNA-directed RNA polymerase subunit omega.